Here is a 293-residue protein sequence, read N- to C-terminus: Acetyl-coenzyme A carboxylase carboxyl transferase subunit beta (293 aa).

The region spanning 29-293 (LWSKCPECGL…GSKSLELTNA (265 aa)) is the CoA carboxyltransferase N-terminal domain. Zn(2+)-binding residues include C33, C36, C52, and C55. The C4-type zinc-finger motif lies at 33–55 (CPECGLVVYLKDLRLNASVCAGC).

Belongs to the AccD/PCCB family. In terms of assembly, acetyl-CoA carboxylase is a heterohexamer composed of biotin carboxyl carrier protein (AccB), biotin carboxylase (AccC) and two subunits each of ACCase subunit alpha (AccA) and ACCase subunit beta (AccD). The cofactor is Zn(2+).

The protein resides in the cytoplasm. The enzyme catalyses N(6)-carboxybiotinyl-L-lysyl-[protein] + acetyl-CoA = N(6)-biotinyl-L-lysyl-[protein] + malonyl-CoA. Its pathway is lipid metabolism; malonyl-CoA biosynthesis; malonyl-CoA from acetyl-CoA: step 1/1. Its function is as follows. Component of the acetyl coenzyme A carboxylase (ACC) complex. Biotin carboxylase (BC) catalyzes the carboxylation of biotin on its carrier protein (BCCP) and then the CO(2) group is transferred by the transcarboxylase to acetyl-CoA to form malonyl-CoA. The chain is Acetyl-coenzyme A carboxylase carboxyl transferase subunit beta from Synechococcus sp. (strain CC9902).